Here is a 253-residue protein sequence, read N- to C-terminus: Proproteinase E (253 aa).

Positions 1–11 (FSQPFSRPSSR) are cleaved as a propeptide — activation peptide. The region spanning 12 to 251 (VVNGEDAVPY…FIDWIDETIA (240 aa)) is the Peptidase S1 domain. 5 disulfide bridges follow: cysteine 41–cysteine 57, cysteine 100–cysteine 103, cysteine 140–cysteine 206, cysteine 171–cysteine 187, and cysteine 196–cysteine 227.

The protein belongs to the peptidase S1 family. As to quaternary structure, monomer. The zymogen is secreted as a ternary complex composed of procarboxypeptidase A, chymotrypsinogen C and proproteinase E. In terms of tissue distribution, pancreas.

Its subcellular location is the secreted. The protein localises to the extracellular space. Functionally, may protect procarboxypeptidase A against denaturation in the acidic environment of the ruminant duodenum. This is Proproteinase E from Bos taurus (Bovine).